The primary structure comprises 753 residues: Catalase-peroxidase (753 aa).

A cross-link (tryptophyl-tyrosyl-methioninium (Trp-Tyr) (with M-269)) is located at residues 91 to 243 (WHSAGTYRIG…LGAVQMGLIY (153 aa)). His92 (proton acceptor) is an active-site residue. A cross-link (tryptophyl-tyrosyl-methioninium (Tyr-Met) (with W-91)) is located at residues 243-269 (YVNPEGPDGNPDPLAAAHDIRETFARM). His284 is a binding site for heme b.

The protein belongs to the peroxidase family. Peroxidase/catalase subfamily. In terms of assembly, homodimer or homotetramer. Heme b serves as cofactor. Post-translationally, formation of the three residue Trp-Tyr-Met cross-link is important for the catalase, but not the peroxidase activity of the enzyme.

It catalyses the reaction H2O2 + AH2 = A + 2 H2O. The enzyme catalyses 2 H2O2 = O2 + 2 H2O. Its function is as follows. Bifunctional enzyme with both catalase and broad-spectrum peroxidase activity. The polypeptide is Catalase-peroxidase (Paraburkholderia xenovorans (strain LB400)).